We begin with the raw amino-acid sequence, 122 residues long: uncharacterized protein (122 aa).

Polar residues predominate over residues 79 to 90 (NERVTSRVTNSR). A disordered region spans residues 79–122 (NERVTSRVTNSRTESESNGNGNATGNTSSNANSNGNANGIYIRK). Residues 94-122 (ESNGNGNATGNTSSNANSNGNANGIYIRK) are compositionally biased toward low complexity.

This is an uncharacterized protein from Leptolyngbya boryana (Plectonema boryanum).